The sequence spans 88 residues: UPF0335 protein MexAM1_META1p2947 (88 aa).

The protein belongs to the UPF0335 family.

The polypeptide is UPF0335 protein MexAM1_META1p2947 (Methylorubrum extorquens (strain ATCC 14718 / DSM 1338 / JCM 2805 / NCIMB 9133 / AM1) (Methylobacterium extorquens)).